We begin with the raw amino-acid sequence, 358 residues long: MRKINFSAGPSTLPLEILEQAQKELCDYQGRGYSIMEISHRTKVFEEVHFGAQEKAKKLYGLNDDYEVLFLQGGASLQFAMIPMNLALNGICEYANTGVWTKKAIKEAQILGVNVKTVASSEESNFNHIPRVEFRDNADYAYICSNNTIYGTQYQNYPKTKTPLIVDASSDFFSRKVDFSNIALFYGGVQKNAGISGLSCIFIRKDMLERSKNKQIPSMLNYLTHAENQSLFNTPPTFAIYMFILEMDWLLNQGGLDKVHEKNSQKAAMLYECIDLSNGFYKGHADKKDRSLMNVSFNIAKNKDLEPLFVKEAEEAGMIGLKGHRILGGIRASIYNALNLDQVKTLCEFMKEFQGKYA.

R41 lines the L-glutamate pocket. Residues A75 to S76, W100, T148, D167, and Q190 each bind pyridoxal 5'-phosphate. K191 bears the N6-(pyridoxal phosphate)lysine mark. N233–T234 contributes to the pyridoxal 5'-phosphate binding site.

This sequence belongs to the class-V pyridoxal-phosphate-dependent aminotransferase family. SerC subfamily. As to quaternary structure, homodimer. The cofactor is pyridoxal 5'-phosphate.

It is found in the cytoplasm. The catalysed reaction is O-phospho-L-serine + 2-oxoglutarate = 3-phosphooxypyruvate + L-glutamate. The enzyme catalyses 4-(phosphooxy)-L-threonine + 2-oxoglutarate = (R)-3-hydroxy-2-oxo-4-phosphooxybutanoate + L-glutamate. The protein operates within amino-acid biosynthesis; L-serine biosynthesis; L-serine from 3-phospho-D-glycerate: step 2/3. Its pathway is cofactor biosynthesis; pyridoxine 5'-phosphate biosynthesis; pyridoxine 5'-phosphate from D-erythrose 4-phosphate: step 3/5. In terms of biological role, catalyzes the reversible conversion of 3-phosphohydroxypyruvate to phosphoserine and of 3-hydroxy-2-oxo-4-phosphonooxybutanoate to phosphohydroxythreonine. This is Phosphoserine aminotransferase from Campylobacter jejuni (strain RM1221).